Here is a 586-residue protein sequence, read N- to C-terminus: Probable zinc metalloprotease EGY3, chloroplastic (586 aa).

The N-terminal 54 residues, 1–54 (MASSSLVTSLLFSSSSSSNTATSTSSRRSFSLFSKNQYCKPRPLRRSSSRLLVR), are a transit peptide targeting the chloroplast. Disordered regions lie at residues 13–32 (SSSS…SFSL) and 58–122 (QQQQ…DWRS). The segment covering 61 to 73 (QEEKAAPAAESHH) has biased composition (basic and acidic residues). The stretch at 103-195 (VKKSKEELEE…NTFKALDLNK (93 aa)) forms a coiled coil. 7 consecutive transmembrane segments (helical) span residues 287–307 (LSAV…SGFF), 318–338 (VSDV…SEIA), 389–409 (ASAY…DGSL), 427–447 (PLLS…GNVL), 454–474 (VGVP…VTSL), 506–526 (VALG…WGLF), and 550–570 (YAWG…NGGG).

Belongs to the peptidase M50B family.

Its subcellular location is the plastid. The protein resides in the chloroplast membrane. In terms of biological role, probable membrane-associated metalloprotease that may be involved in chloroplast development. The sequence is that of Probable zinc metalloprotease EGY3, chloroplastic (EGY3) from Oryza sativa subsp. japonica (Rice).